Consider the following 204-residue polypeptide: High frequency lysogenization protein HflD homolog (204 aa).

The protein belongs to the HflD family.

It is found in the cytoplasm. The protein localises to the cell inner membrane. The polypeptide is High frequency lysogenization protein HflD homolog (Shewanella amazonensis (strain ATCC BAA-1098 / SB2B)).